Here is a 106-residue protein sequence, read N- to C-terminus: Large ribosomal subunit protein P1B (106 aa).

The residue at position 2 (Ser-2) is an N-acetylserine. Residues 69–82 (AGAASGAAAAGGDA) show a composition bias toward low complexity. Positions 69–106 (AGAASGAAAAGGDAAAEEEKEEEAAEESDDDMGFGLFD) are disordered. Residues 83-100 (AAEEEKEEEAAEESDDDM) are compositionally biased toward acidic residues. Ser-96 is modified (phosphoserine).

It belongs to the eukaryotic ribosomal protein P1/P2 family. As to quaternary structure, component of the large ribosomal subunit (LSU). Mature yeast ribosomes consist of a small (40S) and a large (60S) subunit. The 40S small subunit contains 1 molecule of ribosomal RNA (18S rRNA) and 33 different proteins (encoded by 57 genes). The large 60S subunit contains 3 rRNA molecules (25S, 5.8S and 5S rRNA) and 46 different proteins (encoded by 81 genes). The 5 acidic ribosomal P-proteins form the stalk structure of the 60S subunit. They are organized as a pentameric complex in which uL10/P0 interacts with 2 heterodimers, P1A-P2B and P1B-P2A.

It localises to the cytoplasm. In terms of biological role, component of the ribosome, a large ribonucleoprotein complex responsible for the synthesis of proteins in the cell. The small ribosomal subunit (SSU) binds messenger RNAs (mRNAs) and translates the encoded message by selecting cognate aminoacyl-transfer RNA (tRNA) molecules. The large subunit (LSU) contains the ribosomal catalytic site termed the peptidyl transferase center (PTC), which catalyzes the formation of peptide bonds, thereby polymerizing the amino acids delivered by tRNAs into a polypeptide chain. The nascent polypeptides leave the ribosome through a tunnel in the LSU and interact with protein factors that function in enzymatic processing, targeting, and the membrane insertion of nascent chains at the exit of the ribosomal tunnel. The chain is Large ribosomal subunit protein P1B from Saccharomyces cerevisiae (strain ATCC 204508 / S288c) (Baker's yeast).